Reading from the N-terminus, the 141-residue chain is MAARLCCHLDSARDVLLLRPFGPQSSGPSFPRPAAGSAASSASSPSPSDDSDLPLGRLPACFASGSGPCCLVFTCADLRTMDSTVNFVSWHANRQLGMPSKDLWTPYIKDQLLTKWEEGSIDPRLSIFLLGGCRHKCMRLL.

The segment at 25–52 (SSGPSFPRPAAGSAASSASSPSPSDDSD) is disordered. The mitochondrial targeting sequence stretch occupies residues 68–113 (PCCLVFTCADLRTMDSTVNFVSWHANRQLGMPSKDLWTPYIKDQLL).

Belongs to the orthohepadnavirus protein X family. In terms of assembly, may form homodimer. May interact with host CEBPA, CFLAR, CREB1, DDB1, E4F1, HBXIP, HSPD1/HSP60, NFKBIA, POLR2E and SMAD4. Interacts with host SMC5-SMC6 complex and induces its degradation. Interacts with host TRPC4AP; leading to prevent ubiquitination of TRPC4AP. Interacts with host PLSCR1; this interaction promotes ubiquitination and degradation of HBx and impairs HBx-mediated cell proliferation. A fraction may be phosphorylated in insect cells and HepG2 cells, a human hepatoblastoma cell line. Phosphorylated in vitro by host protein kinase C or mitogen-activated protein kinase. N-acetylated in insect cells.

Its subcellular location is the host cytoplasm. The protein localises to the host nucleus. It localises to the host mitochondrion. Its function is as follows. Multifunctional protein that plays a role in silencing host antiviral defenses and promoting viral transcription. Does not seem to be essential for HBV infection. May be directly involved in development of cirrhosis and liver cancer (hepatocellular carcinoma). Most of cytosolic activities involve modulation of cytosolic calcium. The effect on apoptosis is controversial depending on the cell types in which the studies have been conducted. May induce apoptosis by localizing in mitochondria and causing loss of mitochondrial membrane potential. May also modulate apoptosis by binding host CFLAR, a key regulator of the death-inducing signaling complex (DISC). Promotes viral transcription by using the host E3 ubiquitin ligase DDB1 to target the SMC5-SMC6 complex to proteasomal degradation. This host complex would otherwise bind to viral episomal DNA, and prevents its transcription. Moderately stimulates transcription of many different viral and cellular transcription elements. Promoters and enhancers stimulated by HBx contain DNA binding sites for NF-kappa-B, AP-1, AP-2, c-EBP, ATF/CREB, or the calcium-activated factor NF-AT. The chain is Protein X from Woodchuck hepatitis B virus (isolate 2) (WHV).